The sequence spans 262 residues: MINLAYDDNGTGDPVVFIAGRGGAGRTWHPHQVPAFLAAGYRCITFDNRGIGATENAEGFTTQTMVADTAALIETLDIAPARVVGVSMGAFIAQELMVVAPELVSSAVLMATRGRLDRARQFFNKAEAELYDSGVQLPPTYDARARLLENFSRKTLNDDVAVGDWIAMFSMWPIKSTPGLRCQLDCAPQTNRLPAYRNIAAPVLVIGFADDVVTPPYLGREVADALPNGRYLQIPDAGHLGFFERPEAVNTAMLKFFASVKA.

Residues Arg-21, 87-88 (SM), and Arg-120 each bind substrate. The active site involves Ser-87. Catalysis depends on residues Asp-211 and His-239. Position 239 (His-239) interacts with substrate.

Belongs to the AB hydrolase superfamily. Homodimer.

This is Putative non-heme bromoperoxidase BpoC (bpoC) from Mycobacterium tuberculosis (strain CDC 1551 / Oshkosh).